Here is a 176-residue protein sequence, read N- to C-terminus: Inner membrane-spanning protein YciB (176 aa).

The next 5 membrane-spanning stretches (helical) occupy residues 24–44, 49–69, 76–96, 119–139, and 149–169; these read TATAVAIVATLVQIAWVAFRH, PMLWVSLGVVTVFGGATLVLH, WKPTVLYWAFSVALIVSQLAF, LSVVWAIFFVLLGLVNLFVAY, and FKLFGATGCLVVFIVGQSLWL.

This sequence belongs to the YciB family.

It is found in the cell inner membrane. Plays a role in cell envelope biogenesis, maintenance of cell envelope integrity and membrane homeostasis. In Paraburkholderia phytofirmans (strain DSM 17436 / LMG 22146 / PsJN) (Burkholderia phytofirmans), this protein is Inner membrane-spanning protein YciB.